The primary structure comprises 242 residues: Probable transcriptional regulatory protein EUBREC_1961 (242 aa).

The protein belongs to the TACO1 family.

It localises to the cytoplasm. The polypeptide is Probable transcriptional regulatory protein EUBREC_1961 (Agathobacter rectalis (strain ATCC 33656 / DSM 3377 / JCM 17463 / KCTC 5835 / VPI 0990) (Eubacterium rectale)).